A 277-amino-acid chain; its full sequence is Large ribosomal subunit protein uL2 (277 aa).

The tract at residues 222–277 is disordered; sequence GSVMNPNDHPHGGGEGKAPVGRKAPSTPWGKPALGLKTRNKKAKSDKLIVRRRNEK. Over residues 264-277 the composition is skewed to basic and acidic residues; it reads AKSDKLIVRRRNEK.

Belongs to the universal ribosomal protein uL2 family. In terms of assembly, part of the 50S ribosomal subunit. Forms a bridge to the 30S subunit in the 70S ribosome.

Functionally, one of the primary rRNA binding proteins. Required for association of the 30S and 50S subunits to form the 70S ribosome, for tRNA binding and peptide bond formation. It has been suggested to have peptidyltransferase activity; this is somewhat controversial. Makes several contacts with the 16S rRNA in the 70S ribosome. The chain is Large ribosomal subunit protein uL2 from Streptococcus thermophilus (strain CNRZ 1066).